Consider the following 131-residue polypeptide: MTPFPPPLSGSAQDETPELRPRFDENGLIAAIAQDAGTGEVLMLAWMNAEALQKTIETGRATYWSRSRGALWVKGETSGHTQEVIELRVDCDQDAVLLKVRQTGGACHTHRESCFYRRIEGGVLSFTGKAD.

Aspartate 90 serves as a coordination point for Mg(2+). Cysteine 91 is a binding site for Zn(2+). The Mg(2+) site is built by aspartate 92 and aspartate 94. Residues cysteine 107 and cysteine 114 each coordinate Zn(2+).

This sequence belongs to the PRA-CH family. Homodimer. Requires Mg(2+) as cofactor. The cofactor is Zn(2+).

It localises to the cytoplasm. It carries out the reaction 1-(5-phospho-beta-D-ribosyl)-5'-AMP + H2O = 1-(5-phospho-beta-D-ribosyl)-5-[(5-phospho-beta-D-ribosylamino)methylideneamino]imidazole-4-carboxamide. The protein operates within amino-acid biosynthesis; L-histidine biosynthesis; L-histidine from 5-phospho-alpha-D-ribose 1-diphosphate: step 3/9. Functionally, catalyzes the hydrolysis of the adenine ring of phosphoribosyl-AMP. This Hyphomonas neptunium (strain ATCC 15444) protein is Phosphoribosyl-AMP cyclohydrolase.